Consider the following 746-residue polypeptide: Proline--tRNA ligase (746 aa).

A required for editing of incorrectly charged tRNA region spans residues 1–223 (MNNNTNGEII…NSNNNNNNNN (223 aa)). Residues 181-201 (TSKARVDKKEDVQEEMAKNEE) show a composition bias toward basic and acidic residues. The tract at residues 181–226 (TSKARVDKKEDVQEEMAKNEELQNNNNNNKNNSNSNNNNNNNNNHI) is disordered. Residues 204–224 (NNNNNNKNNSNSNNNNNNNNN) show a composition bias toward low complexity. R390 contributes to the L-proline binding site. ATP contacts are provided by residues 390 to 394 (RWEFK), 401 to 405 (RTREF), and 475 to 477 (QAA). L-proline is bound at residue H480. 512–514 (TTR) provides a ligand contact to ATP.

It belongs to the class-II aminoacyl-tRNA synthetase family. ProS type 3 subfamily. Homodimer.

Its subcellular location is the cytoplasm. It carries out the reaction tRNA(Pro) + L-proline + ATP = L-prolyl-tRNA(Pro) + AMP + diphosphate. Inhibited by the quinazolinone-based compound febrifugine from the Chinese plant Dichroa febrifuga which is used to treat malaria-associated fever. Also inhibited by febrifugine derivatives such as halofuginone. Functionally, catalyzes the attachment of proline to tRNA(Pro) in a two-step reaction: proline is first activated by ATP to form Pro-AMP and then transferred to the acceptor end of tRNA(Pro). Functions in trans to edit the amino acid moiety from incorrectly charged Ala-tRNA(Pro). Has no activity on correctly charged Pro-tRNA(Pro) or Ala-tRNA(Ala). In Plasmodium falciparum (isolate 3D7), this protein is Proline--tRNA ligase.